The chain runs to 388 residues: Chorismate synthase (388 aa).

NADP(+) contacts are provided by Arg-39 and Arg-45. FMN-binding positions include 132 to 134, 251 to 252, Gly-296, 311 to 315, and Arg-337; these read RSS, NA, and KPIPT.

It belongs to the chorismate synthase family. As to quaternary structure, homotetramer. The cofactor is FMNH2.

It catalyses the reaction 5-O-(1-carboxyvinyl)-3-phosphoshikimate = chorismate + phosphate. The protein operates within metabolic intermediate biosynthesis; chorismate biosynthesis; chorismate from D-erythrose 4-phosphate and phosphoenolpyruvate: step 7/7. Catalyzes the anti-1,4-elimination of the C-3 phosphate and the C-6 proR hydrogen from 5-enolpyruvylshikimate-3-phosphate (EPSP) to yield chorismate, which is the branch point compound that serves as the starting substrate for the three terminal pathways of aromatic amino acid biosynthesis. This reaction introduces a second double bond into the aromatic ring system. In Staphylococcus aureus (strain MW2), this protein is Chorismate synthase.